Reading from the N-terminus, the 524-residue chain is Magnesium/proton exchanger 2 (524 aa).

11 helical membrane passes run 28–48 (GVRA…LSAI), 88–108 (IADV…LATI), 125–145 (GTLV…CVVM), 157–177 (LGVW…LYII), 185–205 (VITL…LLHA), 325–345 (VIGI…AFIP), 349–369 (IAHG…IAYG), 377–397 (ISCV…AAGT), 430–450 (IYVG…LFVY), 462–482 (LSFS…VLVL), and 496–516 (MWAW…VVLS).

The protein belongs to the Ca(2+):cation antiporter (CaCA) (TC 2.A.19) family. MHX subfamily.

It localises to the vacuole membrane. Vacuolar transporter that exchanges protons with Mg(2+), Zn(2+) and Fe(2+) ions. May control the partitioning of Mg(2+) and Zn(2+) between plant organs. This Oryza sativa subsp. japonica (Rice) protein is Magnesium/proton exchanger 2 (MHX2).